Reading from the N-terminus, the 449-residue chain is uncharacterized protein (449 aa).

The segment covering 1–13 (MPKAPKTKLHHAP) has biased composition (basic residues). The tract at residues 1-125 (MPKAPKTKLH…SQEEEEYEEL (125 aa)) is disordered. Residue Ser22 is modified to Phosphoserine. Positions 73 to 84 (KPSQISAFISNG) are enriched in polar residues. At Ser156 the chain carries Phosphoserine.

It belongs to the bystin family.

This is an uncharacterized protein from Schizosaccharomyces pombe (strain 972 / ATCC 24843) (Fission yeast).